Here is a 513-residue protein sequence, read N- to C-terminus: Xylose import ATP-binding protein XylG (513 aa).

2 ABC transporter domains span residues 5 to 242 (LEMK…VERE) and 259 to 505 (LRIE…LRSE). Residue 37-44 (GENGSGKS) participates in ATP binding.

Belongs to the ABC transporter superfamily. Xylose importer (TC 3.A.1.2.4) family. As to quaternary structure, the complex is composed of two ATP-binding proteins (XylG), two transmembrane proteins (XylH) and a solute-binding protein (XylF).

The protein resides in the cell inner membrane. It carries out the reaction D-xylose(out) + ATP + H2O = D-xylose(in) + ADP + phosphate + H(+). Part of the ABC transporter complex XylFGH involved in xylose import. Responsible for energy coupling to the transport system. The protein is Xylose import ATP-binding protein XylG of Shigella flexneri.